We begin with the raw amino-acid sequence, 270 residues long: Formamidopyrimidine-DNA glycosylase (270 aa).

Proline 2 functions as the Schiff-base intermediate with DNA in the catalytic mechanism. The Proton donor role is filled by glutamate 3. The Proton donor; for beta-elimination activity role is filled by lysine 58. Residues histidine 91, arginine 110, and arginine 151 each coordinate DNA. Residues 236–270 (FVYGRGGQPCKVCGTELREVKLGQRASVYCPRCQR) form an FPG-type zinc finger. The active-site Proton donor; for delta-elimination activity is the arginine 260.

It belongs to the FPG family. As to quaternary structure, monomer. Zn(2+) serves as cofactor.

The catalysed reaction is Hydrolysis of DNA containing ring-opened 7-methylguanine residues, releasing 2,6-diamino-4-hydroxy-5-(N-methyl)formamidopyrimidine.. It carries out the reaction 2'-deoxyribonucleotide-(2'-deoxyribose 5'-phosphate)-2'-deoxyribonucleotide-DNA = a 3'-end 2'-deoxyribonucleotide-(2,3-dehydro-2,3-deoxyribose 5'-phosphate)-DNA + a 5'-end 5'-phospho-2'-deoxyribonucleoside-DNA + H(+). Functionally, involved in base excision repair of DNA damaged by oxidation or by mutagenic agents. Acts as a DNA glycosylase that recognizes and removes damaged bases. Has a preference for oxidized purines, such as 7,8-dihydro-8-oxoguanine (8-oxoG). Has AP (apurinic/apyrimidinic) lyase activity and introduces nicks in the DNA strand. Cleaves the DNA backbone by beta-delta elimination to generate a single-strand break at the site of the removed base with both 3'- and 5'-phosphates. The protein is Formamidopyrimidine-DNA glycosylase of Pseudomonas putida (strain ATCC 700007 / DSM 6899 / JCM 31910 / BCRC 17059 / LMG 24140 / F1).